Here is a 252-residue protein sequence, read N- to C-terminus: Delta-like protein dsl-1 (252 aa).

The first 17 residues, 1–17 (MLKYLIFLAILISVVHS), serve as a signal peptide directing secretion. One can recognise a DSL domain in the interval 120–164 (IKCNRYWHGLHCDHFCNDDFARTINRRCTQNGTLGCLEGFHGPNC). Disulfide bonds link C122–C131, C135–C147, C155–C164, C173–C181, C175–C197, and C199–C209. Positions 169–210 (PADSCKCQNGGKCVSSLENTWAQNGSLICECRLGHFEGKHCE) constitute an EGF-like domain.

May interact with lin-12/Notch receptor.

It localises to the secreted. Its function is as follows. Probable secreted Notch ligand involved in the mediation of Notch signaling. Involved in the lin-12/Notch pathway-mediated signaling of cell fate in vulval precursor cells (VPCs), acting redundantly with lag-2, apx-1 and osm-11. May also be involved in glp-1/Notch signaling. This chain is Delta-like protein dsl-1, found in Caenorhabditis elegans.